The chain runs to 624 residues: Chaperone protein HtpG (624 aa).

Residues 1–336 (MKGQETRGFQ…SSDLPLNVSR (336 aa)) are a; substrate-binding. Residues 337–552 (EILQDSTVTR…ADEMSTQMAK (216 aa)) form a b region. Residues 553 to 624 (LFAAAGQKVP…IRRMNQLLVS (72 aa)) form a c region.

The protein belongs to the heat shock protein 90 family. In terms of assembly, homodimer.

The protein localises to the cytoplasm. Functionally, molecular chaperone. Has ATPase activity. The protein is Chaperone protein HtpG of Escherichia coli O1:K1 / APEC.